Reading from the N-terminus, the 124-residue chain is Small ribosomal subunit protein uS12 (124 aa).

D89 bears the 3-methylthioaspartic acid mark. The interval 104–124 (SAGVQNRNRGRSKYGTKRPKK) is disordered. Basic residues predominate over residues 111-124 (NRGRSKYGTKRPKK).

Belongs to the universal ribosomal protein uS12 family. Part of the 30S ribosomal subunit. Contacts proteins S8 and S17. May interact with IF1 in the 30S initiation complex.

With S4 and S5 plays an important role in translational accuracy. Its function is as follows. Interacts with and stabilizes bases of the 16S rRNA that are involved in tRNA selection in the A site and with the mRNA backbone. Located at the interface of the 30S and 50S subunits, it traverses the body of the 30S subunit contacting proteins on the other side and probably holding the rRNA structure together. The combined cluster of proteins S8, S12 and S17 appears to hold together the shoulder and platform of the 30S subunit. This chain is Small ribosomal subunit protein uS12, found in Desulforamulus reducens (strain ATCC BAA-1160 / DSM 100696 / MI-1) (Desulfotomaculum reducens).